A 684-amino-acid chain; its full sequence is Signal peptide peptidase-like 2C (684 aa).

The first 21 residues, 1-21 (MACLGFLLPVGFLLLISTVAG), serve as a signal peptide directing secretion. The Lumenal portion of the chain corresponds to 22–186 (GKYGVAHVVS…APPEPIIDYN (165 aa)). One can recognise a PA domain in the interval 83-163 (SPSQRPLRQT…HYADMLDILS (81 aa)). Residue Asn-100 is glycosylated (N-linked (GlcNAc...) asparagine). The chain crosses the membrane as a helical span at residues 187-207 (MLVIFILAVGTVAAGGYWAGL). The Cytoplasmic segment spans residues 208–253 (TEANRLQRRRARRGGGSGGHHQLQEAAAAEGAQKEDNEDIPVDFTP). The interval 216 to 242 (RRARRGGGSGGHHQLQEAAAAEGAQKE) is disordered. The segment covering 227–238 (HHQLQEAAAAEG) has biased composition (low complexity). Residues 254 to 274 (AMTGVVVTLSCSLMLLLYFFY) form a helical membrane-spanning segment. At 275 to 276 (DH) the chain is on the lumenal side. Residues 277 to 297 (FVYVTIGIFGLGAGIGLYSCL) form a helical membrane-spanning segment. Over 298–319 (SPLVCRLSLRQYQRPPHSLWAS) the chain is Cytoplasmic. Residues 320 to 340 (LPLPLLLLASLCATVIIFWVA) form a helical membrane-spanning segment. Topologically, residues 341–346 (YRNEDR) are lumenal. A helical transmembrane segment spans residues 347–365 (WAWLLQDTLGISYCLFVLH). At 366 to 376 (RVRLPTLKNCS) the chain is on the cytoplasmic side. The helical transmembrane segment at 377-397 (SFLLALLAFDVFFVFVTPFFT) threads the bilayer. Asp-386 is an active-site residue. The Lumenal portion of the chain corresponds to 398 to 439 (KTGESIMAQVALGPAESSSHERLPMVLKVPRLRVSALTLCSQ). Residues 440–460 (PFSILGFGDIVVPGFLVAYCC) form a helical membrane-spanning segment. Residue Asp-448 is part of the active site. Residues 461-472 (RFDVQVCSRQIY) are Cytoplasmic-facing. A helical transmembrane segment spans residues 473-493 (FVACTVAYAVGLLVTFMAMVL). The Lumenal segment spans residues 494–495 (MQ). A helical membrane pass occupies residues 496–516 (MGQPALLYLVSSTLLTSLAVA). The PAL motif lies at 499–501 (PAL). The Cytoplasmic portion of the chain corresponds to 517–684 (ACRQELSLFW…RKSMSTQAPL (168 aa)). Residues 548-614 (KQEGAADAHT…SDAHLDPNEL (67 aa)) form a disordered region. Residues 582–592 (EIVTISENEAT) show a composition bias toward polar residues. Positions 594–611 (PEDRSDSSEGWSDAHLDP) are enriched in basic and acidic residues.

Belongs to the peptidase A22B family. In terms of assembly, interacts (via active sites) with FREY; the interaction stabilizes FREY1 protein and inhibits SPPL2C proteolytic activity. Post-translationally, glycosylated. In terms of tissue distribution, highly expressed in testis where it is primarily localised in spermatids (at protein level).

It localises to the endoplasmic reticulum membrane. Its function is as follows. Sperm-specific intramembrane-cleaving aspartic protease (I-CLiP) that cleaves distinct tail-anchored proteins and SNARE proteins. In elongated spermatids, modulates intracellular Ca(2+) homeostasis by controlling PLN abundance through proteolytic cleavage. During spermatogenesis, processes SNARE proteins and impacts vesicular trafficking which supports compartmental reorganization in maturating spermatids and may play a role in formation of the acrosome. In terms of biological role, in round spermatids, acts as a scaffold protein supporting FREY1 in IZUMO1 recruitment at the endoplasmic reticulum membrane and coordination of IZUMO1 complex assembly. Stabilizes FREY1 at the endoplasmic reticulum membrane through interaction. May recruit IZUMO1 interaction partners. The sequence is that of Signal peptide peptidase-like 2C from Homo sapiens (Human).